The chain runs to 374 residues: MSNDKDSFNVSDLTSALKDEDRAGLVNALKNKLQNLAGQHSDVLENLTPKIRRRVEVLREIQGKHDEIETKFREERAALEAKYQKLYQPLYNKRYEIVNGATEVEGAPEDAKMDQGDEKTAEEKGVPSFWLTALKNNDVISEEITERDEGALIYLKDIKWCKIEEPKGFKLEFFFDQNPYFKNTLLTKAYHMIDEDEPLLEKAIGTEIDWYPGKCLTQKILKKKPKKGAKNAKPITKTEDCESFFNFFNPPQVPDDDEDIDEERAEELQNLMEQDYDIGSTIREKIIPHAVSWFTGEAIEGEEFEIDNDDEDDIDEDEDEDEEDEDEDEEEDDEDEEEEVSKTKKKPSVLHKKGGRPQVTDDQQGERPPECKQQ.

Positions 26–80 form a coiled coil; it reads VNALKNKLQNLAGQHSDVLENLTPKIRRRVEVLREIQGKHDEIETKFREERAALE. Ser-41 carries the post-translational modification Phosphoserine. Positions 47 to 62 match the Nuclear export signal motif; the sequence is LTPKIRRRVEVLREIQ. A Nuclear localization signal motif is present at residues 222–227; it reads KKKPKK. Residues 299–339 are compositionally biased toward acidic residues; the sequence is IEGEEFEIDNDDEDDIDEDEDEDEEDEDEDEEEDDEDEEEE. Positions 299–374 are disordered; the sequence is IEGEEFEIDN…GERPPECKQQ (76 aa). Residues 343 to 355 show a composition bias toward basic residues; it reads TKKKPSVLHKKGG. The segment covering 364-374 has biased composition (basic and acidic residues); that stretch reads QGERPPECKQQ. Cysteine methyl ester is present on Cys-371. Cys-371 carries S-farnesyl cysteine lipidation. A propeptide spans 372–374 (removed in mature form); the sequence is KQQ.

Belongs to the nucleosome assembly protein (NAP) family. In terms of assembly, can form homomeric and heteromeric protein complexes with NAP1;1, NAP1;2 and NAP1;4. Binds histone H2A and associates with chromatin in vivo. In terms of tissue distribution, ubiquitous.

The protein localises to the nucleus. It is found in the cytoplasm. May modulate chromatin structure by regulation of nucleosome assembly/disassembly. May function in nucleotide excision repair (NER). Involved in somatic homologous recombination. Could be involved in response to abscisic acid (ABA) and to salt stress. In Arabidopsis thaliana (Mouse-ear cress), this protein is Nucleosome assembly protein 1;3 (NAP1;3).